The primary structure comprises 1266 residues: Rho GTPase-activating protein 29 (1266 aa).

A phosphoserine mark is found at Ser166, Ser171, Ser174, and Ser185. One can recognise an F-BAR domain in the interval 187 to 457 (IELDNLLLKN…SAKLYDPGQE (271 aa)). Residues 291–413 (RKNEMEKQRK…EILTQLRTLV (123 aa)) are a coiled coil. Ser496, Ser516, and Ser549 each carry phosphoserine. Low complexity predominate over residues 538–556 (SESTGGSSESRSLDSESIS). The tract at residues 538-596 (SESTGGSSESRSLDSESISPGDFHRKLPRTPSSGTMSSADDLDEREPPSPSEAGPNSLG) is disordered. A Phorbol-ester/DAG-type zinc finger spans residues 609-654 (THKFRKLRSPTKCRDCEGIVMFPGVECEECLLVCHRKCLENLVIVC). In terms of domain architecture, Rho-GAP spans 668 to 883 (AEFIQVAKKE…FLITYAQKIF (216 aa)). Phosphoserine occurs at positions 915, 951, and 1023. Disordered stretches follow at residues 1033–1054 (AGSP…KFGK), 1114–1153 (VSTG…DSCP), and 1222–1248 (VQTS…QRPR). A compositionally biased stretch (polar residues) spans 1115–1127 (STGNNRGHSSGAA). The span at 1132-1148 (AHADPARSARDTSEHSS) shows a compositional bias: basic and acidic residues. Phosphoserine occurs at positions 1149 and 1151. Residues 1263-1266 (PQFV) are interaction with PTPN13/PTPL1.

In terms of assembly, interacts with PTPN13/PTPL1. Interacts with RAP2A via its coiled coil domain. Interacts with RASIP1.

Functionally, GTPase activator for the Rho-type GTPases by converting them to an inactive GDP-bound state. Has strong activity toward RHOA, and weaker activity toward RAC1 and CDC42. May act as a specific effector of RAP2A to regulate Rho. In concert with RASIP1, suppresses RhoA signaling and dampens ROCK and MYH9 activities in endothelial cells and plays an essential role in blood vessel tubulogenesis. The sequence is that of Rho GTPase-activating protein 29 (Arhgap29) from Rattus norvegicus (Rat).